Reading from the N-terminus, the 265-residue chain is 4-hydroxy-tetrahydrodipicolinate reductase (265 aa).

16–21 (GANGKM) contacts NAD(+). Arg-43 serves as a coordination point for NADP(+). NAD(+) contacts are provided by residues 106-108 (GTT) and 130-133 (SENF). His-164 (proton donor/acceptor) is an active-site residue. His-165 contributes to the (S)-2,3,4,5-tetrahydrodipicolinate binding site. Lys-168 serves as the catalytic Proton donor. 174–175 (AT) serves as a coordination point for (S)-2,3,4,5-tetrahydrodipicolinate.

The protein belongs to the DapB family. In terms of assembly, homotetramer.

It localises to the cytoplasm. The catalysed reaction is (S)-2,3,4,5-tetrahydrodipicolinate + NAD(+) + H2O = (2S,4S)-4-hydroxy-2,3,4,5-tetrahydrodipicolinate + NADH + H(+). The enzyme catalyses (S)-2,3,4,5-tetrahydrodipicolinate + NADP(+) + H2O = (2S,4S)-4-hydroxy-2,3,4,5-tetrahydrodipicolinate + NADPH + H(+). The protein operates within amino-acid biosynthesis; L-lysine biosynthesis via DAP pathway; (S)-tetrahydrodipicolinate from L-aspartate: step 4/4. Functionally, catalyzes the conversion of 4-hydroxy-tetrahydrodipicolinate (HTPA) to tetrahydrodipicolinate. This chain is 4-hydroxy-tetrahydrodipicolinate reductase, found in Wigglesworthia glossinidia brevipalpis.